An 80-amino-acid chain; its full sequence is WAP four-disulfide core domain protein 15B (80 aa).

Positions 1 to 20 are cleaved as a signal peptide; sequence MKLLGLSLLAVTILLCCNMA. One can recognise a WAP domain in the interval 29–76; sequence VFSKPGYCPEYRVPCPFVLIPKCRRDKGCKDALKCCFFYCQMRCVDPW. Disulfide bonds link cysteine 36/cysteine 64, cysteine 43/cysteine 68, cysteine 51/cysteine 63, and cysteine 57/cysteine 72.

In terms of tissue distribution, constitutively expressed in kidney and epididymis.

The protein resides in the secreted. In terms of biological role, antibacterial protein which inhibits the growth of E.coli and S.aureus. The polypeptide is WAP four-disulfide core domain protein 15B (Wfdc15b) (Mus musculus (Mouse)).